Reading from the N-terminus, the 282-residue chain is Ribosome-inactivating protein bryodin II (282 aa).

A signal peptide spans 1–21; that stretch reads MRSIGFYSVLALYVGAHVTED. Asn-25 is a glycosylation site (N-linked (GlcNAc...) asparagine). Residue Glu-183 is part of the active site.

This sequence belongs to the ribosome-inactivating protein family. Type 1 RIP subfamily.

The enzyme catalyses Endohydrolysis of the N-glycosidic bond at one specific adenosine on the 28S rRNA.. Its function is as follows. Ribosome-inactivating protein of type 1, inhibits protein synthesis in animal cells. This Bryonia dioica (Red bryony) protein is Ribosome-inactivating protein bryodin II.